The sequence spans 203 residues: Endo-type membrane-bound lytic murein transglycosylase A (203 aa).

Residues 1-15 (MKLRWLMWLVVFLAG) form the signal peptide. The N-palmitoyl cysteine moiety is linked to residue Cys16. A lipid anchor (S-diacylglycerol cysteine) is attached at Cys16.

Belongs to the transglycosylase Slt family.

The protein localises to the cell outer membrane. The enzyme catalyses Endolytic cleavage of the (1-&gt;4)-beta-glycosidic linkage between N-acetylmuramic acid (MurNAc) and N-acetylglucosamine (GlcNAc) residues in peptidoglycan with concomitant formation of a 1,6-anhydrobond in the MurNAc residue.. Functionally, murein-degrading enzyme. May play a role in recycling of muropeptides during cell elongation and/or cell division. Preferentially cleaves at a distance of more than two disaccharide units from the ends of the glycan chain. This is Endo-type membrane-bound lytic murein transglycosylase A from Cronobacter sakazakii (strain ATCC BAA-894) (Enterobacter sakazakii).